Here is a 504-residue protein sequence, read N- to C-terminus: ATP synthase subunit beta (504 aa).

181–188 (GGAGVGKT) lines the ATP pocket.

This sequence belongs to the ATPase alpha/beta chains family. As to quaternary structure, F-type ATPases have 2 components, CF(1) - the catalytic core - and CF(0) - the membrane proton channel. CF(1) has five subunits: alpha(3), beta(3), gamma(1), delta(1), epsilon(1). CF(0) has three main subunits: a(1), b(2) and c(9-12). The alpha and beta chains form an alternating ring which encloses part of the gamma chain. CF(1) is attached to CF(0) by a central stalk formed by the gamma and epsilon chains, while a peripheral stalk is formed by the delta and b chains.

Its subcellular location is the cell inner membrane. It carries out the reaction ATP + H2O + 4 H(+)(in) = ADP + phosphate + 5 H(+)(out). Functionally, produces ATP from ADP in the presence of a proton gradient across the membrane. The catalytic sites are hosted primarily by the beta subunits. The chain is ATP synthase subunit beta from Ehrlichia ruminantium (strain Gardel).